A 172-amino-acid chain; its full sequence is Acetolactate synthase small subunit (172 aa).

One can recognise an ACT domain in the interval 4-78 (TLSVLVEDEA…NVIKVQDITE (75 aa)).

This sequence belongs to the acetolactate synthase small subunit family. As to quaternary structure, dimer of large and small chains.

The catalysed reaction is 2 pyruvate + H(+) = (2S)-2-acetolactate + CO2. It participates in amino-acid biosynthesis; L-isoleucine biosynthesis; L-isoleucine from 2-oxobutanoate: step 1/4. It functions in the pathway amino-acid biosynthesis; L-valine biosynthesis; L-valine from pyruvate: step 1/4. This Synechocystis sp. (strain ATCC 27184 / PCC 6803 / Kazusa) protein is Acetolactate synthase small subunit (ilvH).